The primary structure comprises 193 residues: Proteasome subunit beta 1 (193 aa).

Positions 1-4 (MPGA) are cleaved as a propeptide — removed in mature form; by autocatalysis. Thr-5 acts as the Nucleophile in catalysis.

The protein belongs to the peptidase T1B family. As to quaternary structure, the 20S proteasome core is composed of 14 alpha and 14 beta subunits that assemble into four stacked heptameric rings, resulting in a barrel-shaped structure. The two inner rings, each composed of seven catalytic beta subunits, are sandwiched by two outer rings, each composed of seven alpha subunits. The catalytic chamber with the active sites is on the inside of the barrel. Has a gated structure, the ends of the cylinder being occluded by the N-termini of the alpha-subunits. Is capped at one or both ends by the proteasome regulatory ATPase, PAN.

It is found in the cytoplasm. It carries out the reaction Cleavage of peptide bonds with very broad specificity.. With respect to regulation, the formation of the proteasomal ATPase PAN-20S proteasome complex, via the docking of the C-termini of PAN into the intersubunit pockets in the alpha-rings, triggers opening of the gate for substrate entry. Interconversion between the open-gate and close-gate conformations leads to a dynamic regulation of the 20S proteasome proteolysis activity. In terms of biological role, component of the proteasome core, a large protease complex with broad specificity involved in protein degradation. In Cenarchaeum symbiosum (strain A), this protein is Proteasome subunit beta 1.